Here is a 508-residue protein sequence, read N- to C-terminus: Serine/threonine-protein kinase VRK2 (508 aa).

A Protein kinase domain is found at Trp29–Pro319. Residues Ile35–Ile43 and Lys61 contribute to the ATP site. The Proton acceptor role is filled by Asp166. Residue Thr336 is modified to Phosphothreonine. Residues Thr397 to Leu508 are interaction with MAP3K7. Position 406 is a phosphoserine (Ser406). Residues Val487–Phe507 form a helical; Anchor for type IV membrane protein membrane-spanning segment.

Belongs to the protein kinase superfamily. CK1 Ser/Thr protein kinase family. VRK subfamily. In terms of assembly, isoform 1 interacts with MAP3K7, MAP2K7, MAP2K1 and KSR1. Isoform 1 and isoform 2 interact with RAN and MAPK8IP1. (Microbial infection) Isoform 1 interacts with Epstein-Barr virus BHRF1; this interaction is involved in protecting cells from apoptosis. As to quaternary structure, (Microbial infection) Isoform 1 interacts with vaccinia protein B12. Autophosphorylated. In terms of tissue distribution, isoform 1 and isoform 2 are expressed in various tumor cell lines. Expression of isoform 1 inversely correlates with ERBB2 in breast carcinomas (at protein level). Widely expressed. Highly expressed in fetal liver, skeletal muscle, pancreas, heart, peripheral blood leukocytes and testis.

The protein resides in the cytoplasm. It localises to the endoplasmic reticulum membrane. Its subcellular location is the mitochondrion membrane. The protein localises to the nucleus envelope. It is found in the nucleus. The enzyme catalyses L-seryl-[protein] + ATP = O-phospho-L-seryl-[protein] + ADP + H(+). The catalysed reaction is L-threonyl-[protein] + ATP = O-phospho-L-threonyl-[protein] + ADP + H(+). Its activity is regulated as follows. RAN inhibits its autophosphorylation and its ability to phosphorylate histone H3. In terms of biological role, serine/threonine kinase that regulates several signal transduction pathways. Isoform 1 modulates the stress response to hypoxia and cytokines, such as interleukin-1 beta (IL1B) and this is dependent on its interaction with MAPK8IP1, which assembles mitogen-activated protein kinase (MAPK) complexes. Inhibition of signal transmission mediated by the assembly of MAPK8IP1-MAPK complexes reduces JNK phosphorylation and JUN-dependent transcription. Phosphorylates 'Thr-18' of p53/TP53, histone H3, and may also phosphorylate MAPK8IP1. Phosphorylates BANF1 and disrupts its ability to bind DNA and reduces its binding to LEM domain-containing proteins. Down-regulates the transactivation of transcription induced by ERBB2, HRAS, BRAF, and MEK1. Blocks the phosphorylation of ERK in response to ERBB2 and HRAS. Can also phosphorylate the following substrates that are commonly used to establish in vitro kinase activity: casein, MBP and histone H2B, but it is not sure that this is physiologically relevant. Functionally, phosphorylates 'Thr-18' of p53/TP53, as well as histone H3. Reduces p53/TP53 ubiquitination by MDM2, promotes p53/TP53 acetylation by EP300 and thereby increases p53/TP53 stability and activity. This chain is Serine/threonine-protein kinase VRK2 (VRK2), found in Homo sapiens (Human).